The sequence spans 515 residues: Forkhead box protein H1 (515 aa).

Positions 55 to 103 are disordered; that stretch reads YREGGTWSPDRGSMHGLSPGTQEGSCTQAEGTKDSLGGDETLSRKSKKK. Positions 73-84 are enriched in polar residues; the sequence is PGTQEGSCTQAE. The segment at residues 110-206 is a DNA-binding region (fork-head); sequence KPPYSYLAMI…MKLQNTALTR (97 aa). Positions 307–399 are disordered; that stretch reads YPQSKPTRNG…EPPKKMPLLS (93 aa). Residues 322–339 are compositionally biased toward low complexity; that stretch reads SASHSTYSSSSSSISTIS. Over residues 375–388 the composition is skewed to polar residues; that stretch reads STPSSDTDAGNYSP. The segment at 377 to 503 is SMAD-interaction domain (SID); the sequence is PSSDTDAGNY…PSFLGQCLGS (127 aa). The Fast/FoxH1 motif 1 (FM1) motif lies at 402 to 406; that stretch reads LPTSY. A Fast/FoxH1 motif 2 (FM2) motif is present at residues 412-418; that stretch reads PNVVAPP. The SMAD-interaction motif (SIM) motif lies at 467–488; that stretch reads LDNMLKTVPPNKSVFDVLTSHP.

As to quaternary structure, ARF1 contains 2 smad2s, 1 smad4 and 1 foxh1/fast-1 protein. Interaction with smad4 is most likely indirect through interaction with the MH2 domain of smad2. Binds to the MH2 domain of smad3, which can incorporate into the ARF1 complex. The ARF1 and ARF2 complexes are activated by distinct TGF-beta family members; formation of ARF1 is promoted by activin. Interacts (via Fork-head domain) with gtf2ird1/wbscr11 (via repeats 4-5).

Its subcellular location is the nucleus. Functionally, transcriptional activator. Recognizes and binds to the DNA sequence 5'-TGT[GT][GT]ATT-3'. Upon TGF-beta induction, forms a transcriptionally active complex with smad2 and smad4 called activin-responsive factor 1 (ARF1), which binds a site on the mix-B/mix.2 promoter called the activin response element (ARE). Binds to activated smads and the ARE with much lower affinity than fast3. Necessary for the first steps in mesoderm specification, directly inducing mesodermal genes. Acts with fast3 to control the convergent extension movements of gastrulation. Binds to the proximal element (PE) of the gsc gene and cooperates with gtf2ird1/wbscr11 and SMAD proteins to regulate gsc transcription. The protein is Forkhead box protein H1 of Xenopus tropicalis (Western clawed frog).